Consider the following 546-residue polypeptide: Probable protein kinase UbiB (546 aa).

The region spanning 123 to 501 is the Protein kinase domain; sequence DFDETPLASA…SRRQGQARYL (379 aa). ATP is bound by residues 129-137 and K152; that span reads LASASIAQV. The active-site Proton acceptor is D287. A run of 2 helical transmembrane segments spans residues 496 to 516 and 521 to 541; these read GQAR…VFLL and HIEW…LGWF.

It belongs to the ABC1 family. UbiB subfamily.

Its subcellular location is the cell inner membrane. It functions in the pathway cofactor biosynthesis; ubiquinone biosynthesis [regulation]. Functionally, is probably a protein kinase regulator of UbiI activity which is involved in aerobic coenzyme Q (ubiquinone) biosynthesis. This chain is Probable protein kinase UbiB, found in Aeromonas salmonicida (strain A449).